Consider the following 211-residue polypeptide: Large ribosomal subunit protein uL3 (211 aa).

This sequence belongs to the universal ribosomal protein uL3 family. As to quaternary structure, part of the 50S ribosomal subunit. Forms a cluster with proteins L14 and L19.

One of the primary rRNA binding proteins, it binds directly near the 3'-end of the 23S rRNA, where it nucleates assembly of the 50S subunit. The chain is Large ribosomal subunit protein uL3 from Akkermansia muciniphila (strain ATCC BAA-835 / DSM 22959 / JCM 33894 / BCRC 81048 / CCUG 64013 / CIP 107961 / Muc).